The chain runs to 288 residues: Ribosomal protein L11 methyltransferase (288 aa).

The S-adenosyl-L-methionine site is built by Thr-141, Gly-164, Asp-186, and Asn-227.

This sequence belongs to the methyltransferase superfamily. PrmA family.

The protein resides in the cytoplasm. The catalysed reaction is L-lysyl-[protein] + 3 S-adenosyl-L-methionine = N(6),N(6),N(6)-trimethyl-L-lysyl-[protein] + 3 S-adenosyl-L-homocysteine + 3 H(+). Methylates ribosomal protein L11. The protein is Ribosomal protein L11 methyltransferase of Myxococcus xanthus (strain DK1622).